Here is a 432-residue protein sequence, read N- to C-terminus: Adenylosuccinate synthetase (432 aa).

Residues 11-17 (GDEGKGK) and 39-41 (GHT) contribute to the GTP site. Asp-12 acts as the Proton acceptor in catalysis. Mg(2+)-binding residues include Asp-12 and Gly-39. IMP-binding positions include 12 to 15 (DEGK), 37 to 40 (NAGH), Thr-134, Arg-148, Asn-230, Thr-245, and Arg-309. His-40 acts as the Proton donor in catalysis. 305–311 (VTTGRKR) lines the substrate pocket. GTP is bound by residues Arg-311, 337-339 (KLD), and 419-421 (GTG).

Belongs to the adenylosuccinate synthetase family. As to quaternary structure, homodimer. Mg(2+) is required as a cofactor.

It is found in the cytoplasm. It carries out the reaction IMP + L-aspartate + GTP = N(6)-(1,2-dicarboxyethyl)-AMP + GDP + phosphate + 2 H(+). The protein operates within purine metabolism; AMP biosynthesis via de novo pathway; AMP from IMP: step 1/2. In terms of biological role, plays an important role in the de novo pathway and in the salvage pathway of purine nucleotide biosynthesis. Catalyzes the first committed step in the biosynthesis of AMP from IMP. The polypeptide is Adenylosuccinate synthetase (Vanderwaltozyma polyspora (strain ATCC 22028 / DSM 70294 / BCRC 21397 / CBS 2163 / NBRC 10782 / NRRL Y-8283 / UCD 57-17) (Kluyveromyces polysporus)).